We begin with the raw amino-acid sequence, 92 residues long: Cytochrome c2 (92 aa).

Heme c-binding residues include Cys-12, Cys-15, His-16, and Met-66.

The protein belongs to the cytochrome c family. In terms of processing, binds 1 heme c group covalently per subunit.

Cytochrome c2 is found mainly in purple, non-sulfur, photosynthetic bacteria where it functions as the electron donor to the oxidized bacteriochlorophyll in the photophosphorylation pathway. However, it may also have a role in the respiratory chain and is found in some non-photosynthetic bacteria. In Rhodocyclus tenuis (Rhodospirillum tenue), this protein is Cytochrome c2.